Reading from the N-terminus, the 376-residue chain is Lysocardiolipin acyltransferase 1 (376 aa).

A helical membrane pass occupies residues 9 to 29 (FILFLFAGSFFGSIFMLGPIL). Residue asparagine 35 is glycosylated (N-linked (GlcNAc...) asparagine). The helical transmembrane segment at 48 to 68 (ATWLTLPVALLETMFGVRVVI) threads the bilayer. The short motif at 85–90 (HRTRVD) is the HXXXXD motif element. Residue lysine 183 is modified to N6-acetyllysine. The next 2 membrane-spanning stretches (helical) occupy residues 309–329 (LLSIVYWALFCSAMCLLIYLY) and 336–356 (FIISIVFFVLQERIFGGLEII).

Belongs to the 1-acyl-sn-glycerol-3-phosphate acyltransferase family. In terms of tissue distribution, widely expressed with highest expression in heart, liver and 12.5 dpc aorta-gonad-mesonephros and lower levels in the 16 dpc fetal liver and adult bone marrow. In bone marrow, highest levels are found in B-cells compared with whole bone marrow, T-cells, erythrocytes, and granulocytes.

Its subcellular location is the endoplasmic reticulum membrane. The catalysed reaction is a 1-acyl-sn-glycero-3-phosphate + an acyl-CoA = a 1,2-diacyl-sn-glycero-3-phosphate + CoA. It carries out the reaction a 1-acyl-sn-glycero-3-phospho-(1D-myo-inositol) + an acyl-CoA = a 1,2-diacyl-sn-glycero-3-phospho-(1D-myo-inositol) + CoA. The enzyme catalyses 1-acyl-sn-glycero-3-phospho-(1'-sn-glycerol) + an acyl-CoA = a 1,2-diacyl-sn-glycero-3-phospho-(1'-sn-glycerol) + CoA. It catalyses the reaction 1-hexadecanoyl-sn-glycero-3-phosphate + (9Z)-octadecenoyl-CoA = 1-hexadecanoyl-2-(9Z-octadecenoyl)-sn-glycero-3-phosphate + CoA. The catalysed reaction is 1-(9Z-octadecenoyl)-sn-glycero-3-phosphate + (9Z)-octadecenoyl-CoA = 1,2-di-(9Z-octadecenoyl)-sn-glycero-3-phosphate + CoA. It carries out the reaction 1-(9Z,12Z)-octadecadienoyl-sn-glycero-3-phosphate + (9Z)-octadecenoyl-CoA = 1-(9Z,12Z)-octadecadienoyl-2-(9Z)-octadecenoyl-sn-glycero-3-phosphate + CoA. The enzyme catalyses 1-(9Z,12Z,15Z)-octadecatrienoyl-sn-glycero-3-phosphate + (9Z)-octadecenoyl-CoA = 1-(9Z,12Z,15Z)-octadecatrienoyl-2-(9Z)-octadecenoyl-sn-glycero-3-phosphate + CoA. It catalyses the reaction 1-(9Z-octadecenoyl)-sn-glycero-3-phosphate + hexadecanoyl-CoA = 1-(9Z)-octadecenoyl-2-hexadecanoyl-sn-glycero-3-phosphate + CoA. The catalysed reaction is 1-(9Z-octadecenoyl)-sn-glycero-3-phosphate + octadecanoyl-CoA = 1-(9Z-octadecenoyl)-2-octadecanoyl-sn-glycero-3-phosphate + CoA. It carries out the reaction 1-acyl-sn-glycero-3-phospho-(1'-sn-glycerol) + (9Z)-octadecenoyl-CoA = 1-acyl-2-(9Z-octadecenoyl)-sn-glycero-3-phospho-(1'-sn-glycerol) + CoA. The enzyme catalyses a 1-acyl-sn-glycero-3-phospho-(1D-myo-inositol) + (9Z)-octadecenoyl-CoA = a 1-acyl-2-(9Z-octadecenoyl)-sn-glycero-3-phospho-(1D-myo-inositol) + CoA. It catalyses the reaction 1-hexadecanoyl-sn-glycero-3-phospho-(1D-myo-inositol) + hexadecanoyl-CoA = 1,2-dihexadecanoyl-sn-glycero-3-phospho-(1D-myo-inositol) + CoA. The catalysed reaction is 1-hexadecanoyl-sn-glycero-3-phospho-(1D-myo-inositol) + octadecanoyl-CoA = 1-hexadecanoyl-2-octadecanoyl-sn-glycero-3-phospho-(1D-myo-inositol) + CoA. It carries out the reaction 1-hexadecanoyl-sn-glycero-3-phospho-(1D-myo-inositol) + (9Z)-octadecenoyl-CoA = 1-hexadecanoyl-2-(9Z-octadecenoyl)-sn-glycero-3-phospho-(1D-myo-inositol) + CoA. The enzyme catalyses 1-hexadecanoyl-sn-glycero-3-phospho-(1D-myo-inositol) + (9Z,12Z)-octadecadienoyl-CoA = 1-hexadecanoyl-2-(9Z,12Z-octadecadienoyl)-sn-glycero-3-phospho-(1D-myo-inositol) + CoA. It catalyses the reaction 1-hexadecanoyl-sn-glycero-3-phospho-(1D-myo-inositol) + (5Z,8Z,11Z,14Z)-eicosatetraenoyl-CoA = 1-hexadecanoyl-2-(5Z,8Z,11Z,14Z-eicosatetraenoyl)-sn-glycero-3-phospho-D-myo-inositol + CoA. The catalysed reaction is 1-hexadecanoyl-sn-glycero-3-phospho-(1'-sn-glycerol) + hexadecanoyl-CoA = 1,2-dihexadecanoyl-sn-glycero-3-phospho-(1'-sn-glycerol) + CoA. It carries out the reaction 1-hexadecanoyl-sn-glycero-3-phospho-(1'-sn-glycerol) + octadecanoyl-CoA = 1-hexadecanoyl-2-octadecanoyl-sn-glycero-3-phospho-(1'-sn-glycerol) + CoA. The enzyme catalyses 1-hexadecanoyl-sn-glycero-3-phospho-(1'-sn-glycerol) + (9Z)-octadecenoyl-CoA = 1-hexadecanoyl-2-(9Z-octadecenoyl)-sn-glycero-3-phospho-(1'-sn-glycerol) + CoA. It catalyses the reaction 1-hexadecanoyl-sn-glycero-3-phospho-(1'-sn-glycerol) + (9Z,12Z)-octadecadienoyl-CoA = 1-hexadecanoyl-2-(9Z,12Z-octadecadienoyl)-sn-glycero-3-phospho-(1'-sn-glycerol) + CoA. The catalysed reaction is 1-tetradecanoyl-sn-glycero-3-phospho-(1'-sn-glycerol) + (9Z)-octadecenoyl-CoA = 1-tetradecanoyl-2-(9Z-octadecenoyl)-sn-glycero-3-phospho-(1'-sn-glycerol) + CoA. It carries out the reaction 1-octadecanoyl-sn-glycero-3-phospho-(1'-sn-glycerol) + (9Z)-octadecenoyl-CoA = 1-octadecanoyl-2-(9Z-octadecenoyl)-sn-glycero-3-phospho-(1'-sn-glycerol) + CoA. The enzyme catalyses 1-(9Z-octadecenoyl)-sn-glycero-3-phospho-(1'-sn-glycerol) + (9Z)-octadecenoyl-CoA = 1,2-di-(9Z-octadecenoyl)-sn-glycero-3-phospho-(1'-sn-glycerol) + CoA. It catalyses the reaction 1-hexadecanoyl-sn-glycero-3-phospho-(1D-myo-inositol) + dodecanoyl-CoA = 1-hexadecanoyl-2-dodecanoyl-sn-glycero-3-phospho-(1D-myo-inositol) + CoA. The catalysed reaction is 1',3'-bis-[1-acyl-sn-glycero-3-phospho]-glycerol + (9Z)-octadecenoyl-CoA = 1'-[1-acyl-2-(9Z)-octadecenoyl-sn-glycero-3-phospho],3'-[1-acyl,2-hydroxy-sn-glycero-3-phospho]-glycerol + CoA. It carries out the reaction 1'-[1,2-diacyl-sn-glycero-3-phospho],3'-[1-acyl-sn-glycero-3-phospho]-glycerol + (9Z)-octadecenoyl-CoA = 1'-[1,2-diacyl-sn-glycero-3-phospho],3'-[1-acyl,2-(9Z)-octadecenoyl-sn-glycero-3-phospho]-glycerol + CoA. The enzyme catalyses 1'-[1,2-diacyl-sn-glycero-3-phospho],3'-[1-acyl-sn-glycero-3-phospho]-glycerol + (9Z,12Z)-octadecadienoyl-CoA = 1'-[1,2-diacyl-sn-glycero-3-phospho],3'-[1-acyl,2-(9Z,12Z)-octadecadienoyl-sn-glycero-3-phospho]-glycerol + CoA. It catalyses the reaction 1'-[1,2-diacyl-sn-glycero-3-phospho],3'-[1-acyl-sn-glycero-3-phospho]-glycerol + dodecanoyl-CoA = 1'-[1,2-diacyl-sn-glycero-3-phospho],3'-[1-acyl,2-dodecanoyl-sn-glycero-3-phospho]-glycerol + CoA. The catalysed reaction is 1',3'-bis-[1-acyl-sn-glycero-3-phospho]-glycerol + dodecanoyl-CoA = 1'-[1-acyl-2-dodecanoyl-sn-glycero-3-phospho],3'-[1-acyl,2-hydroxy-sn-glycero-3-phospho]-glycerol + CoA. It carries out the reaction a 1-acyl-sn-glycero-3-phosphate + (9Z)-octadecenoyl-CoA = a 1-acyl-2-(9Z-octadecenoyl)-sn-glycero-3-phosphate + CoA. The enzyme catalyses 1',3'-bis-[1-acyl-sn-glycero-3-phospho]-glycerol + (9Z,12Z)-octadecadienoyl-CoA = 1'-[1-acyl-2-(9Z,12Z)-octadecadienoyl-sn-glycero-3-phospho],3'-[1-acyl,2-hydroxy-sn-glycero-3-phospho]-glycerol + CoA. It catalyses the reaction 1',3'-bis-[1-acyl-sn-glycero-3-phospho]-glycerol + hexadecanoyl-CoA = 1'-[1-acyl-2-hexadecanoyl-sn-glycero-3-phospho],3'-[1-acyl,2-hydroxy-sn-glycero-3-phospho]-glycerol + CoA. The catalysed reaction is 1',3'-bis-[1-acyl-sn-glycero-3-phospho]-glycerol + octadecanoyl-CoA = 1'-[1-acyl-2-octadecanoyl-sn-glycero-3-phospho],3'-[1-acyl,2-hydroxy-sn-glycero-3-phospho]-glycerol + CoA. It carries out the reaction 1'-[1,2-diacyl-sn-glycero-3-phospho],3'-[1-acyl-sn-glycero-3-phospho]-glycerol + octanoyl-CoA = 1'-[1,2-diacyl-sn-glycero-3-phospho],3'-[1-acyl,2-octanoyl-sn-glycero-3-phospho]-glycerol + CoA. The enzyme catalyses 1',3'-bis-[1-acyl-sn-glycero-3-phospho]-glycerol + octanoyl-CoA = 1'-[1-acyl-2-octanoyl-sn-glycero-3-phospho],3'-[1-acyl,2-hydroxy-sn-glycero-3-phospho]-glycerol + CoA. It catalyses the reaction 1'-[1,2-diacyl-sn-glycero-3-phospho],3'-[1-acyl-sn-glycero-3-phospho]-glycerol + hexadecanoyl-CoA = 1'-[1,2-diacyl-sn-glycero-3-phospho],3'-[1-acyl,2-hexadecanoyl-sn-glycero-3-phospho]-glycerol + CoA. The catalysed reaction is 1'-[1,2-diacyl-sn-glycero-3-phospho],3'-[1-acyl-sn-glycero-3-phospho]-glycerol + (5Z,8Z,11Z,14Z)-eicosatetraenoyl-CoA = 1'-[1,2-diacyl-sn-glycero-3-phospho],3'-[1-acyl,2-(5Z,8Z,11Z,14Z)-eicosatetraenoyl-sn-glycero-3-phospho]-glycerol + CoA. It carries out the reaction 1',3'-bis-[1-acyl-sn-glycero-3-phospho]-glycerol + (5Z,8Z,11Z,14Z)-eicosatetraenoyl-CoA = 1'-[1-acyl-2-(5Z,8Z,11Z,14Z)-eicosatetraenoyl-sn-glycero-3-phospho],3'-[1-acyl,2-hydroxy-sn-glycero-3-phospho]-glycerol + CoA. The enzyme catalyses a 1-acyl-sn-glycero-3-phospho-(1D-myo-inositol) + octadecanoyl-CoA = a 1-acyl-2-octadecanoyl-sn-glycero-3-phospho-(1D-myo-inositol) + CoA. It catalyses the reaction a 2-acyl-sn-glycero-3-phospho-D-myo-inositol + octadecanoyl-CoA = 1-octadecanoyl-2-acyl-sn-glycero-3-phospho-1D-myo-inositol + CoA. It participates in phospholipid metabolism; CDP-diacylglycerol biosynthesis; CDP-diacylglycerol from sn-glycerol 3-phosphate: step 2/3. Its function is as follows. Exhibits acyl-CoA:lysocardiolipin acyltransferase (ALCAT) activity; catalyzes the reacylation of lyso-cardiolipin to cardiolipin (CL), a key step in CL remodeling. Recognizes both monolysocardiolipin and dilysocardiolipin as substrates with a preference for linoleoyl-CoA and oleoyl-CoA as acyl donors. Also exhibits 1-acyl-sn-glycerol-3-phosphate acyltransferase activity (AGPAT) activity; converts 1-acyl-sn-glycerol-3- phosphate (lysophosphatidic acid or LPA) into 1,2-diacyl-sn-glycerol-3- phosphate (phosphatidic acid or PA) by incorporating an acyl moiety at the sn-2 position of the glycerol backbone. Possesses lysophosphatidylinositol acyltransferase (LPIAT) activity. Possesses lysophosphatidylglycerol acyltransferase (LPGAT) activity. Required for establishment of the hematopoietic and endothelial lineages. In Mus musculus (Mouse), this protein is Lysocardiolipin acyltransferase 1 (Lclat1).